The following is a 324-amino-acid chain: RING-H2 finger protein ATL3 (324 aa).

The chain crosses the membrane as a helical span at residues 24–44 (IILTAIIVLFMAVLFVLILHL). The RING-type; atypical zinc-finger motif lies at 127-169 (CSICLSELVKGDKARLLPKCNHSFHVECIDMWFQSHSTCPICR). Disordered stretches follow at residues 179–210 (SSKRVEQVPDNAENAGTTNNNHDALSQLSTSS), 226–248 (VSTGNTNVGTQEDGAAGNGASQS), and 299–324 (RDKRVGCSNSSTSNSSSSNAVASVDP). Composition is skewed to polar residues over residues 192–210 (NAGTTNNNHDALSQLSTSS) and 226–235 (VSTGNTNVGT). The span at 306–324 (SNSSTSNSSSSNAVASVDP) shows a compositional bias: low complexity.

Belongs to the RING-type zinc finger family. ATL subfamily.

The protein localises to the membrane. The enzyme catalyses S-ubiquitinyl-[E2 ubiquitin-conjugating enzyme]-L-cysteine + [acceptor protein]-L-lysine = [E2 ubiquitin-conjugating enzyme]-L-cysteine + N(6)-ubiquitinyl-[acceptor protein]-L-lysine.. The protein operates within protein modification; protein ubiquitination. This Arabidopsis thaliana (Mouse-ear cress) protein is RING-H2 finger protein ATL3 (ATL3).